Here is a 140-residue protein sequence, read N- to C-terminus: ATP synthase epsilon chain (140 aa).

Belongs to the ATPase epsilon chain family. As to quaternary structure, F-type ATPases have 2 components, CF(1) - the catalytic core - and CF(0) - the membrane proton channel. CF(1) has five subunits: alpha(3), beta(3), gamma(1), delta(1), epsilon(1). CF(0) has three main subunits: a, b and c.

The protein resides in the cell inner membrane. Its function is as follows. Produces ATP from ADP in the presence of a proton gradient across the membrane. This Xanthomonas oryzae pv. oryzae (strain MAFF 311018) protein is ATP synthase epsilon chain.